The following is a 796-amino-acid chain: RNA cytosine-C(5)-methyltransferase NSUN2 (796 aa).

The span at 1 to 11 (MGRRARDRRRQ) shows a compositional bias: basic residues. The segment at 1–36 (MGRRARDRRRQLQPQQRRERSGGGGGGGDDQAGWAG) is disordered. Residues 22–36 (GGGGGGGDDQAGWAG) are compositionally biased toward gly residues. S-adenosyl-L-methionine is bound by residues 184–190 (CAAPGSK), Asp215, Asp242, and Asp268. Cys321 acts as the Nucleophile in catalysis. Disordered regions lie at residues 435-501 (WNKR…CGPP) and 707-796 (RKEG…NVKD). 3 stretches are compositionally biased toward basic and acidic residues: residues 467 to 483 (ATEK…KKVQ), 708 to 721 (KEGE…EEVQ), and 733 to 746 (VEDK…KMEA). Residues 774-783 (CSKNTNSHIN) are compositionally biased toward polar residues. A compositionally biased stretch (basic and acidic residues) spans 784 to 796 (QESKDMNTNNVKD).

The protein belongs to the class I-like SAM-binding methyltransferase superfamily. RsmB/NOP family. TRM4 subfamily.

It is found in the nucleus. Its subcellular location is the nucleolus. The protein localises to the cytoplasm. The protein resides in the mitochondrion. It localises to the cytoskeleton. It is found in the spindle. Its subcellular location is the secreted. The protein localises to the extracellular exosome. The catalysed reaction is cytidine(48) in tRNA + S-adenosyl-L-methionine = 5-methylcytidine(48) in tRNA + S-adenosyl-L-homocysteine + H(+). It catalyses the reaction cytidine(49) in tRNA + S-adenosyl-L-methionine = 5-methylcytidine(49) in tRNA + S-adenosyl-L-homocysteine + H(+). It carries out the reaction cytidine(50) in tRNA + S-adenosyl-L-methionine = 5-methylcytidine(50) in tRNA + S-adenosyl-L-homocysteine + H(+). The enzyme catalyses cytidine(34) in tRNA precursor + S-adenosyl-L-methionine = 5-methylcytidine(34) in tRNA precursor + S-adenosyl-L-homocysteine + H(+). The catalysed reaction is a cytidine in mRNA + S-adenosyl-L-methionine = a 5-methylcytidine in mRNA + S-adenosyl-L-homocysteine + H(+). Functionally, RNA cytosine C(5)-methyltransferase that methylates cytosine to 5-methylcytosine (m5C) in various RNAs, such as tRNAs, mRNAs and some long non-coding RNAs (lncRNAs). Involved in various processes, such as epidermal stem cell differentiation, testis differentiation and maternal to zygotic transition during early development: acts by increasing protein synthesis; cytosine C(5)-methylation promoting tRNA stability and preventing mRNA decay. Methylates cytosine to 5-methylcytosine (m5C) at positions 34 and 48 of intron-containing tRNA(Leu)(CAA) precursors, and at positions 48, 49 and 50 of tRNA(Gly)(GCC) precursors. tRNA methylation is required generation of RNA fragments derived from tRNAs (tRFs). Also mediates C(5)-methylation of mitochondrial tRNAs. Catalyzes cytosine C(5)-methylation of mRNAs, leading to stabilize them and prevent mRNA decay. Cytosine C(5)-methylation of mRNAs also regulates mRNA export. Also mediates cytosine C(5)-methylation of non-coding RNAs, such as vault RNAs (vtRNAs), promoting their processing into regulatory small RNAs. Required for proper spindle assembly and chromosome segregation, independently of its methyltransferase activity. The chain is RNA cytosine-C(5)-methyltransferase NSUN2 from Gallus gallus (Chicken).